A 1337-amino-acid polypeptide reads, in one-letter code: Protein cordon-bleu (1337 aa).

The tract at residues 1–41 is disordered; the sequence is MDAPRALAAKPPTGRKMKARAPPPPGKPAAQNVHSEQKLPH. 6 positions are modified to phosphoserine: Ser47, Ser50, Ser212, Ser235, Ser272, and Ser294. Disordered regions lie at residues 260-556 and 647-768; these read SKAE…NDDE and IASQ…HHGQ. Residues 288–317 show a composition bias toward polar residues; sequence CVTTPNSPSLHSRSLTLGPSLSLGNISGVS. A KKRRAP 1 motif is present at residues 323 to 328; the sequence is KKRRAP. A phosphoserine mark is found at Ser346 and Ser349. A KKRRAP 2 motif is present at residues 356–361; the sequence is KKRRAP. Residues 361–374 show a composition bias toward pro residues; the sequence is PAPPPPQQPPPSPV. At Ser372 the chain carries Phosphoserine. The segment covering 377 to 387 has biased composition (basic and acidic residues); it reads NRKEDKEENRK. Over residues 411 to 423 the composition is skewed to pro residues; it reads LVLPPPPPYPPPD. A compositionally biased stretch (acidic residues) spans 469–480; the sequence is ESEETASEDTTE. Over residues 484–500 the composition is skewed to polar residues; it reads VMSSPSDAISLDSQQDS. Thr522 bears the Phosphothreonine mark. Residues 526–541 are compositionally biased toward low complexity; it reads GPQKSPSWGKSGSGSS. Composition is skewed to polar residues over residues 647-666 and 687-710; these read IASQ…QPFV and QPTL…TSLV. Ser649 bears the Phosphoserine mark. The segment covering 714–736 has biased composition (basic and acidic residues); sequence LIDDPKAKDKGKVHGSSHSEKTQ. Position 816 is a phosphoserine (Ser816). Disordered regions lie at residues 892–923 and 967–991; these read TPQQ…SVKV and KATT…DDAA. Phosphoserine is present on Ser1038. Over residues 1070 to 1090 the composition is skewed to polar residues; sequence GFNEKQTTSNQKANSTSNFSQ. Disordered regions lie at residues 1070–1094, 1113–1133, 1145–1168, and 1192–1221; these read GFNE…ALDK, MNGS…KEST, KPSS…FGPK, and AIHS…SYVE. Ser1128 carries the phosphoserine modification. WH2 domains are found at residues 1185–1205 and 1225–1245; these read LHSA…LRKT and ERSA…LRKV. A compositionally biased stretch (basic and acidic residues) spans 1197-1214; the sequence is GGREKLRKTAEQTSEGRP. The interval 1262-1310 is disordered; that stretch reads GAPGLDKPQQEDLGLPPPPALPPPPAPAPQAPSASVTVSRFSTGTPSNS. Residues 1276 to 1291 show a composition bias toward pro residues; sequence LPPPPALPPPPAPAPQ. Over residues 1297–1310 the composition is skewed to polar residues; it reads VTVSRFSTGTPSNS. The residue at position 1303 (Ser1303) is a Phosphoserine. The WH2 3 domain occupies 1313-1333; it reads ARQALMDAIRSGTGAARLRKV.

In terms of assembly, identified in a complex composed of COBL, PACSIN1 and WASL. Interacts with PACSIN1, PACSIN2 and PACSIN3. Identified in a complex composed of ACTA1, COBL, GSN and TMSB4X. Interacts (via WH2 domains) with actin monomers. Interacts with DBNL. In terms of tissue distribution, detected in brain cortex and in the Purkinje cell layer in the cerebellum. Detected in hippocampus neurons, and at lower levels in testis, lung and spleen (at protein level). Detected in embryonic neural tube.

The protein resides in the cell membrane. It localises to the cytoplasm. The protein localises to the cytoskeleton. Its subcellular location is the cell projection. It is found in the ruffle. Plays an important role in the reorganization of the actin cytoskeleton. Binds to and sequesters actin monomers (G actin). Nucleates actin polymerization by assembling three actin monomers in cross-filament orientation and thereby promotes growth of actin filaments at the barbed end. Can also mediate actin depolymerization at barbed ends and severing of actin filaments. Promotes formation of cell ruffles. Regulates neuron morphogenesis and increases branching of axons and dendrites. Regulates dendrite branching in Purkinje cells. In Mus musculus (Mouse), this protein is Protein cordon-bleu (Cobl).